The primary structure comprises 93 residues: Guanine nucleotide-binding protein subunit gamma (93 aa).

The segment at 1-22 (MPQYASRDVGDPSQIKKNKQSM) is disordered. Cys-89 carries the S-palmitoyl cysteine lipid modification. Cysteine methyl ester is present on Cys-90. Residue Cys-90 is the site of S-farnesyl cysteine attachment. Residues 91-93 (VVM) constitute a propeptide, removed in mature form.

The protein belongs to the G protein gamma family. As to quaternary structure, g proteins are composed of 3 units, alpha, beta and gamma.

The protein localises to the membrane. The sequence is that of Guanine nucleotide-binding protein subunit gamma (gng-1) from Neurospora crassa (strain ATCC 24698 / 74-OR23-1A / CBS 708.71 / DSM 1257 / FGSC 987).